The following is a 777-amino-acid chain: Glucocorticoid receptor (777 aa).

Over residues 1–14 (MDSKESLTPGKEEN) the composition is skewed to basic and acidic residues. A disordered region spans residues 1 to 21 (MDSKESLTPGKEENPSSVLTQ). The modulating stretch occupies residues 1 to 420 (MDSKESLTPG…TATTGPPPKL (420 aa)). Residue Thr8 is modified to Phosphothreonine. Residue Arg23 is modified to Omega-N-methylarginine. A phosphoserine mark is found at Ser45, Ser113, Ser134, and Ser141. The disordered stretch occupies residues 130–182 (NRSTSVPENPKSSASSSVSAAPKEKEFPKTHSDVSSEQQNLKGQTGTNGGNVK). Positions 134–150 (SVPENPKSSASSSVSAA) are enriched in low complexity. The segment covering 151–163 (PKEKEFPKTHSDV) has biased composition (basic and acidic residues). Positions 164–174 (SSEQQNLKGQT) are enriched in polar residues. Residues Ser203, Ser211, and Ser226 each carry the phosphoserine modification. A Glycyl lysine isopeptide (Lys-Gly) (interchain with G-Cter in SUMO2) cross-link involves residue Lys258. Ser267 carries the post-translational modification Phosphoserine. Residues Lys277 and Lys293 each participate in a glycyl lysine isopeptide (Lys-Gly) (interchain with G-Cter in SUMO); alternate cross-link. Glycyl lysine isopeptide (Lys-Gly) (interchain with G-Cter in SUMO2); alternate cross-links involve residues Lys277 and Lys293. The segment covering 394 to 414 (SSPSMRPDVSSPPSSSSTATT) has biased composition (low complexity). Residues 394 to 415 (SSPSMRPDVSSPPSSSSTATTG) form a disordered region. At Ser404 the chain carries Phosphoserine. Lys419 participates in a covalent cross-link: Glycyl lysine isopeptide (Lys-Gly) (interchain with G-Cter in ubiquitin). 2 consecutive NR C4-type zinc fingers follow at residues 421–441 (CLVC…CGSC) and 457–481 (CAGR…YRKC). Positions 421–486 (CLVCSDEASG…RYRKCLQAGM (66 aa)) form a DNA-binding region, nuclear receptor. An N6-acetyllysine mark is found at Lys480, Lys492, Lys494, and Lys495. The segment at 485-777 (GMNLEARKTK…NIKKLLFHQK (293 aa)) is interaction with CLOCK. A hinge region spans residues 487 to 523 (NLEARKTKKKIKGIQQATTGVSQETSENPANKTIVPA). One can recognise an NR LBD domain in the interval 524-758 (TLPQLTPTLV…FPEMLAEIIT (235 aa)). The interaction with CRY1 stretch occupies residues 532–697 (LVSLLEVIEP…EIRMTYIKEL (166 aa)). Lys703 participates in a covalent cross-link: Glycyl lysine isopeptide (Lys-Gly) (interchain with G-Cter in SUMO).

The protein belongs to the nuclear hormone receptor family. NR3 subfamily. As to quaternary structure, heteromultimeric cytoplasmic complex with HSP90AA1, HSPA1A/HSPA1B, and FKBP5 or another immunophilin such as PPID, STIP1, or the immunophilin homolog PPP5C. Upon ligand binding FKBP5 dissociates from the complex and FKBP4 takes its place, thereby linking the complex to dynein and mediating transport to the nucleus, where the complex dissociates. Probably forms a complex composed of chaperones HSP90 and HSP70, co-chaperones CDC37, PPP5C, TSC1 and client protein TSC2, CDK4, AKT, RAF1 and NR3C1; this complex does not contain co-chaperones STIP1/HOP and PTGES3/p23. Directly interacts with UNC45A. Binds to DNA as a homodimer, and as heterodimer with NR3C2 or the retinoid X receptor. Binds STAT5A and STAT5B homodimers and heterodimers. Interacts with NRIP1, POU2F1, POU2F2 and TRIM28. Interacts with several coactivator complexes, including the SMARCA4 complex, CREBBP/EP300, TADA2L (Ada complex) and p160 coactivators such as NCOA2 and NCOA6. Interaction with BAG1 inhibits transactivation. Interacts with HEXIM1 and TGFB1I1. Interacts with NCOA1. Interacts with NCOA3, SMARCA4, SMARCC1, SMARCD1, and SMARCE1. Interacts with CLOCK, CRY1 and CRY2 in a ligand-dependent fashion. Interacts with CIART. Interacts with RWDD3. Interacts with UBE2I/UBC9 and this interaction is enhanced in the presence of RWDD3. Interacts with GRIP1. Interacts with NR4A3 (via nuclear receptor DNA-binding domain), represses transcription activity of NR4A3 on the POMC promoter Nur response element (NurRE). Directly interacts with PNRC2 to attract and form a complex with UPF1 and DCP1A; the interaction leads to rapid mRNA degradation. Interacts with GSK3B. Interacts with FNIP1 and FNIP2. Interacts (via C-terminus) with HNRNPU (via C-terminus). Interacts with MCM3AP. Interacts (via domain NR LBD) with HSP90AA1 and HSP90AB1. In the absence of hormonal ligand, interacts with TACC1. Interacts (via NR LBD domain) with ZNF764 (via KRAB domain); the interaction regulates transcription factor activity of NR3C1 by directing its actions toward certain biologic pathways. In terms of processing, acetylation by CLOCK reduces its binding to glucocorticoid response elements and its transcriptional activity. Increased proteasome-mediated degradation in response to glucocorticoids. Post-translationally, phosphorylated in the absence of hormone; becomes hyperphosphorylated in the presence of glucocorticoid. The Ser-203, Ser-226 and Ser-404-phosphorylated forms are mainly cytoplasmic, and the Ser-211-phosphorylated form is nuclear. Phosphorylation at Ser-211 increases transcriptional activity. Phosphorylation at Ser-203, Ser-226 and Ser-404 decreases signaling capacity. Phosphorylation at Ser-404 may protect from glucocorticoid-induced apoptosis. Phosphorylation at Ser-203 and Ser-211 is not required in regulation of chromosome segregation. May be dephosphorylated by PPP5C, attenuates NR3C1 action. In terms of processing, ubiquitinated by UBR5, leading to its degradation: UBR5 specifically recognizes and binds ligand-bound NR3C1 when it is not associated with coactivators (NCOAs). In presence of NCOAs, the UBR5-degron is not accessible, preventing its ubiquitination and degradation. Sumoylation at Lys-277 and Lys-293 negatively regulates its transcriptional activity. Sumoylation at Lys-703 positively regulates its transcriptional activity in the presence of RWDD3. Sumoylation at Lys-277 and Lys-293 is dispensable whereas sumoylation at Lys-703 is critical for the stimulatory effect of RWDD3 on its transcriptional activity. Heat shock increases sumoylation in a RWDD3-dependent manner. As to expression, within the infant and adult hippocampal formation, highest expression observed in the DG granule cell layer with moderate levels in the DG hilus, the CA2-CA4 pyramidal cell layer and the proximal part of the CA1 pyramidal cell layer. Moderate to high expression levels found in the presubiculum and in its' superficial layers. Weak but specific expression detected throughout the entire corticle mantle. In the amygdala, moderate levels were detected in the lateral, central and medial nuclei. Moderate expression levels were present in the PVNh alongside the third ventricle.

Its subcellular location is the cytoplasm. It localises to the nucleus. It is found in the mitochondrion. The protein resides in the cytoskeleton. The protein localises to the spindle. Its subcellular location is the microtubule organizing center. It localises to the centrosome. It is found in the chromosome. The protein resides in the nucleoplasm. Functionally, receptor for glucocorticoids (GC). Has a dual mode of action: as a transcription factor that binds to glucocorticoid response elements (GRE), both for nuclear and mitochondrial DNA, and as a modulator of other transcription factors. Affects inflammatory responses, cellular proliferation and differentiation in target tissues. Involved in chromatin remodeling. Plays a role in rapid mRNA degradation by binding to the 5' UTR of target mRNAs and interacting with PNRC2 in a ligand-dependent manner which recruits the RNA helicase UPF1 and the mRNA-decapping enzyme DCP1A, leading to RNA decay. Could act as a coactivator for STAT5-dependent transcription upon growth hormone (GH) stimulation and could reveal an essential role of hepatic GR in the control of body growth. Mediates glucocorticoid-induced apoptosis. Promotes accurate chromosome segregation during mitosis. May act as a tumor suppressor. May play a negative role in adipogenesis through the regulation of lipolytic and antilipogenic gene expression. In Callithrix jacchus (White-tufted-ear marmoset), this protein is Glucocorticoid receptor (NR3C1).